The chain runs to 244 residues: Capsid protein (244 aa).

The Bipartite nuclear localization signal signature appears at 1–24 (MSTSKRKRGDDANWNKRTTKKKPS). The disordered stretch occupies residues 1-39 (MSTSKRKRGDDANWNKRTTKKKPSSAGLKKAGSKAERPS).

This sequence belongs to the geminiviridae capsid protein family. As to quaternary structure, homomultimer. Interacts with the movement protein. Binds to single-stranded and double-stranded viral DNA.

It is found in the virion. The protein localises to the host nucleus. In terms of biological role, encapsidates the viral genome into characteristic twinned ('geminate') particles. Binds the genomic viral ssDNA and shuttles it into and out of the cell nucleus. Plays a role in protection of the genome from degradation, virus acquisition and transmission by insect vectors, infectivity, and systemic movement. The CP of monopartite geminiviruses is absolutely essential for virus movement. The polypeptide is Capsid protein (Maize streak virus genotype B (isolate Tas) (MSV)).